The following is a 144-amino-acid chain: MAREFSRTNRVGQQIQREIALILQREVKDPRIGMVTVSDVEVSKDLNYAKVYVTFLQLDIDAERIAEGLKGLTEAAGYIRSLLGSAMRLRVVPELRFYYDQTLVEGMRISNLVSNTVRDDKRRMAEAGREEDEAAPDDTTEDKA.

The tract at residues 120–144 (DKRRMAEAGREEDEAAPDDTTEDKA) is disordered. Over residues 129-144 (REEDEAAPDDTTEDKA) the composition is skewed to acidic residues.

This sequence belongs to the RbfA family. Monomer. Binds 30S ribosomal subunits, but not 50S ribosomal subunits or 70S ribosomes.

The protein localises to the cytoplasm. In terms of biological role, one of several proteins that assist in the late maturation steps of the functional core of the 30S ribosomal subunit. Associates with free 30S ribosomal subunits (but not with 30S subunits that are part of 70S ribosomes or polysomes). Required for efficient processing of 16S rRNA. May interact with the 5'-terminal helix region of 16S rRNA. The chain is Ribosome-binding factor A from Aeromonas salmonicida (strain A449).